We begin with the raw amino-acid sequence, 218 residues long: MKIVIADDHAVVRTGFSMILNYQEDMEVVATAADGVEAYQKVLEHRPDVLILDLSMPPGESGLIATSKISESFPDTKILILTMFDDEEYLFHVLKSGAKGYILKNSPDEQLILAVRTVYQGETYVDMKLTTSLVNEFVNQSQTDEVSSSSDPFKILSKRELEILPLIAKGYGNKDIAEKLFVSVKTVEAHKTHIMTKLNLKSKPELVEYALKKKLLEF.

A Response regulatory domain is found at 2–119 (KIVIADDHAV…QLILAVRTVY (118 aa)). D53 bears the 4-aspartylphosphate mark. Residues 149-214 (SSDPFKILSK…ELVEYALKKK (66 aa)) form the HTH luxR-type domain. Residues 173–192 (NKDIAEKLFVSVKTVEAHKT) constitute a DNA-binding region (H-T-H motif).

Phosphorylated by NreB.

The protein localises to the cytoplasm. In terms of biological role, member of the two-component regulatory system NreB/NreC involved in the control of dissimilatory nitrate/nitrite reduction in response to oxygen. Phosphorylated NreC binds to a GC-rich palindromic sequence at the promoters of the nitrate (narGHJI) and nitrite (nir) reductase operons, as well as the putative nitrate transporter gene narT, and activates their expression. The chain is Oxygen regulatory protein NreC (nreC) from Staphylococcus epidermidis (strain ATCC 35984 / DSM 28319 / BCRC 17069 / CCUG 31568 / BM 3577 / RP62A).